We begin with the raw amino-acid sequence, 600 residues long: Sulfite reductase [NADPH] flavoprotein alpha-component (600 aa).

The region spanning 63-201 (ITLISASQTG…VADQWRKQLT (139 aa)) is the Flavodoxin-like domain. Residues 69 to 74 (SQTGNA), 116 to 119 (STQG), and 152 to 161 (LGDTSYERFC) each bind FMN. The region spanning 235–449 (QAPLTAALAT…IEHNDNFRLP (215 aa)) is the FAD-binding FR-type domain. Residues T323, H357, 387-390 (RLYS), 405-407 (TVG), Y411, and 420-423 (GGAS) each bind FAD. Residues 520–521 (SR), 526–530 (KIYVQ), and D562 each bind NADP(+). Y600 is an FAD binding site.

It belongs to the NADPH-dependent sulphite reductase flavoprotein subunit CysJ family. In the N-terminal section; belongs to the flavodoxin family. The protein in the C-terminal section; belongs to the flavoprotein pyridine nucleotide cytochrome reductase family. As to quaternary structure, alpha(8)-beta(8). The alpha component is a flavoprotein, the beta component is a hemoprotein. It depends on FAD as a cofactor. FMN serves as cofactor.

The enzyme catalyses hydrogen sulfide + 3 NADP(+) + 3 H2O = sulfite + 3 NADPH + 4 H(+). It participates in sulfur metabolism; hydrogen sulfide biosynthesis; hydrogen sulfide from sulfite (NADPH route): step 1/1. Its function is as follows. Component of the sulfite reductase complex that catalyzes the 6-electron reduction of sulfite to sulfide. This is one of several activities required for the biosynthesis of L-cysteine from sulfate. The flavoprotein component catalyzes the electron flow from NADPH -&gt; FAD -&gt; FMN to the hemoprotein component. This Photorhabdus laumondii subsp. laumondii (strain DSM 15139 / CIP 105565 / TT01) (Photorhabdus luminescens subsp. laumondii) protein is Sulfite reductase [NADPH] flavoprotein alpha-component.